Consider the following 412-residue polypeptide: Poly-beta-1,6-N-acetyl-D-glucosamine synthase (412 aa).

A run of 4 helical transmembrane segments spans residues 7-28 (LLFYPIFMSIYWIVGSIYYFFI), 298-320 (IASITWVYIVICYLSFLVITANI), 332-354 (IFFFSSFTMTFINIIQFTVALFI), and 364-386 (VGLIFLSWYPTLYWVINAAVVIM).

It belongs to the glycosyltransferase 2 family.

It localises to the cell membrane. Its function is as follows. N-acetylglucosaminyltransferase that catalyzes the polymerization of single monomer units of UDP-N-acetylglucosamine to produce the linear homomer poly-beta-1,6-N-acetyl-D-glucosamine (PNAG, also referred to as PIA), a biofilm adhesin polysaccharide. Requires IcaD for full activity. This chain is Poly-beta-1,6-N-acetyl-D-glucosamine synthase (icaA), found in Staphylococcus epidermidis.